The primary structure comprises 185 residues: ATP synthase subunit delta (185 aa).

It belongs to the ATPase delta chain family. F-type ATPases have 2 components, F(1) - the catalytic core - and F(0) - the membrane proton channel. F(1) has five subunits: alpha(3), beta(3), gamma(1), delta(1), epsilon(1). CF(0) has four main subunits: a(1), b(1), b'(1) and c(10-14). The alpha and beta chains form an alternating ring which encloses part of the gamma chain. F(1) is attached to F(0) by a central stalk formed by the gamma and epsilon chains, while a peripheral stalk is formed by the delta, b and b' chains.

Its subcellular location is the cell inner membrane. Functionally, f(1)F(0) ATP synthase produces ATP from ADP in the presence of a proton or sodium gradient. F-type ATPases consist of two structural domains, F(1) containing the extramembraneous catalytic core and F(0) containing the membrane proton channel, linked together by a central stalk and a peripheral stalk. During catalysis, ATP synthesis in the catalytic domain of F(1) is coupled via a rotary mechanism of the central stalk subunits to proton translocation. In terms of biological role, this protein is part of the stalk that links CF(0) to CF(1). It either transmits conformational changes from CF(0) to CF(1) or is implicated in proton conduction. The chain is ATP synthase subunit delta from Gloeobacter violaceus (strain ATCC 29082 / PCC 7421).